Consider the following 79-residue polypeptide: Hematopoietic cell signal transducer (79 aa).

Positions 1–17 (MDPPGYLLFLLLLPVAA) are cleaved as a signal peptide. Residues 18-35 (SQTSAGSCSGCGTLSLPL) are Extracellular-facing. Residues 36–56 (LAGLVAADAVMSLLIVGVVFV) form a helical membrane-spanning segment. Residues 57–79 (CMRPHGRPAQEDGRVYINMPGRG) are Cytoplasmic-facing. Position 72 is a phosphotyrosine (Tyr72). Residues 72-74 (YIN) form a GRB2 binding site region. A PIK3R1 binding site region spans residues 72–75 (YINM).

The protein belongs to the DAP10 family. In terms of assembly, homodimer; Disulfide-linked. Interacts with KLRK1 to form a stable complex, which results in surface expression of both proteins, whereas alone, it is minimally expressed. Interacts with PIK3R1 and GRB2. Interacts with CLEC5A. Forms an CLEC5A/TYROBP/HCST trimolecular complex depending almost solely on TYROBP. Heterohexamer composed of four subunits of HCST/DAP10 and two subunits of KLRK1. Interacts (via transmembrane domain) with KLRK1 isoform 1 (via transmembrane domain); the interaction is required for KLRK1 cell surface expression on naive NK cells and activated CD8(+) T-cells, but is dispensable on activated TYROBP-expressing NK cells. Interacts (via transmembrane domain) with KLRK1 isoform 2 (via transmembrane domain); the interaction is required for KLRK1 NK cell surface expression and induces NK cell-mediated cytotoxicity. Interacts with CD300H. Phosphorylated; PIK3R1 and GRB2 associate specifically with tyrosine-phosphorylated HCST. Post-translationally, O-glycosylated.

The protein localises to the membrane. In terms of biological role, transmembrane adapter protein which associates with KLRK1 to form an activation receptor KLRK1-HCST in lymphoid and myeloid cells; this receptor plays a major role in triggering cytotoxicity against target cells expressing cell surface ligands such as MHC class I chain-related MICA and MICB, and UL16-binding proteins (ULBPs); these ligands are up-regulated by stress conditions and pathological state such as viral infection and tumor transformation. Functions as a docking site for PI3-kinase PIK3R1 and GRB2. Interaction of ULBPs with KLRK1-HCST triggers calcium mobilization and activation of the PIK3R1, MAP2K/ERK, and JAK2/STAT5 signaling pathways. Both PIK3R1 and GRB2 are required for full KLRK1-HCST-mediated activation and ultimate killing of target cells. In NK cells, KLRK1-HCST signaling directly induces cytotoxicity and enhances cytokine production initiated via DAP12/TYROBP-associated receptors. In T-cells, it provides primarily costimulation for TCR-induced signals. KLRK1-HCST receptor plays a role in immune surveillance against tumors and is required for cytolysis of tumors cells; indeed, melanoma cells that do not express KLRK1 ligands escape from immune surveillance mediated by NK cells. The polypeptide is Hematopoietic cell signal transducer (Hcst) (Mus musculus (Mouse)).